Here is a 424-residue protein sequence, read N- to C-terminus: Protein CLP1 homolog 5 (424 aa).

ATP-binding positions include Glu16, Thr56, and 124-129 (DSGKST).

It belongs to the Clp1 family. Clp1 subfamily. In terms of assembly, forms a complex with cleavage and polyadenylation specificity factor (CPSF) subunits PCFS1, FIPS3 and CPSF30.

The protein localises to the nucleus. Required for endonucleolytic cleavage during polyadenylation-dependent pre-mRNA 3'-end formation. This Arabidopsis thaliana (Mouse-ear cress) protein is Protein CLP1 homolog 5.